The primary structure comprises 566 residues: MKAKLLVLLCALSATDADTICIGYHANNSTDTVDTVLEKNVTVTHSVNLLEDSHNGKLCRLKGIAPLQLGKCSIAGWILGNPECESLFSKKSWSYIAETPNSENGTCYPGYFADYEELREQLSSVSSFERFEIFPKERSWPKHNVTRGVTASCSHKGKSSFYRNLLWLTEKNGSYPNLSKSYVNNKEKEVLVLWGVHHPSNIEDQKTIYRKENAYVSVVSSNYNRRFTPEIAKRPKVRGQEGRINYYWTLLEPGDTIIFEANGNLIAPWYAFALSRGFGSGIITSNASMDECDTKCQTPQGAINSSLPFQNVHPVTIGECPKYVRSTKLRMVTGLRNIPSIQSRGLFGAIAGFIEGGWTGMIDGWYGYHHQNEQGSGYAADQKSTQNAINGITNKVNSVIEKMNTQFTAVGKEFNKLEKRMENLNKKVDDGFLDIWTYNAELLVLLENERTLDFHDSNVKNLYEKVKSQLKNNAKEIGNGCFEFYHKCNNECMESVKNGTYDYPKYSEESKLNREKIDGVKLESMGVYQILAIYSTVASSLCLLVSLGAISFWMCSNGSLQCRICI.

The signal sequence occupies residues Met1–Ala17. Residues Asp18–Gln529 are Extracellular-facing. Disulfide bonds link Cys21–Cys481, Cys59–Cys292, Cys72–Cys84, Cys107–Cys153, Cys296–Cys320, and Cys488–Cys492. N-linked (GlcNAc...) asparagine; by host glycosylation is found at Asn27, Asn28, and Asn40. 6 N-linked (GlcNAc...) asparagine; by host glycosylation sites follow: Asn104, Asn144, Asn172, Asn177, Asn286, and Asn304. Asn498 is a glycosylation site (N-linked (GlcNAc...) asparagine; by host). A helical membrane pass occupies residues Ile530–Ile550. Topologically, residues Ser551 to Ile566 are cytoplasmic. S-palmitoyl cysteine; by host attachment occurs at residues Cys555, Cys562, and Cys565.

This sequence belongs to the influenza viruses hemagglutinin family. In terms of assembly, homotrimer of disulfide-linked HA1-HA2. Interacts with human CACNA1C. Post-translationally, palmitoylated. In terms of processing, in natural infection, inactive HA is matured into HA1 and HA2 outside the cell by one or more trypsin-like, arginine-specific endoprotease secreted by the bronchial epithelial cells. One identified protease that may be involved in this process is secreted in lungs by club cells.

It is found in the virion membrane. Its subcellular location is the host apical cell membrane. Binds to sialic acid-containing receptors on the cell surface, bringing about the attachment of the virus particle to the cell. This attachment induces virion internalization of about two third of the virus particles through clathrin-dependent endocytosis and about one third through a clathrin- and caveolin-independent pathway. Plays a major role in the determination of host range restriction and virulence. Class I viral fusion protein. Responsible for penetration of the virus into the cell cytoplasm by mediating the fusion of the membrane of the endocytosed virus particle with the endosomal membrane. Low pH in endosomes induces an irreversible conformational change in HA2, releasing the fusion hydrophobic peptide. Several trimers are required to form a competent fusion pore. Functionally, binds to sialic acid-containing receptors on the cell surface, bringing about the attachment of the virus particle to the cell. This attachment induces virion internalization either through clathrin-dependent endocytosis or through clathrin- and caveolin-independent pathway. Plays a major role in the determination of host range restriction and virulence. Class I viral fusion protein. Responsible for penetration of the virus into the cell cytoplasm by mediating the fusion of the membrane of the endocytosed virus particle with the endosomal membrane. Low pH in endosomes induces an irreversible conformational change in HA2, releasing the fusion hydrophobic peptide. Several trimers are required to form a competent fusion pore. The sequence is that of Hemagglutinin from Influenza A virus (strain A/Kiev/59/1979 H1N1).